Reading from the N-terminus, the 256-residue chain is MAVGKNKRLSKGKKGLKKKIIDPFTRKDWFDIKAPSTFENRNVGKTLINRSTGMKNAADGLKGRIVEVNLADLQGSEDHSYRNVKLRVDEVQGKNLLTNFHGLSFTSDKLRSLVRKWQSLVEANVTVKTADDYVLRVFALAFTKRQANQVKKTTYAQSSKLREVRKKMSEIMQREVSAVTLAQLTSKLIPEVIGREIEKSTQTIFPLQNVHIRKVKVLKQPKFDLGALLALHGESGGEEKGRKVNTGFKDVVLESV.

Position 2 is an N-acetylalanine; partial (Ala2).

This sequence belongs to the eukaryotic ribosomal protein eS1 family. Component of the small ribosomal subunit. Mature ribosomes consist of a small (40S) and a large (60S) subunit. The 40S subunit contains about 33 different proteins and 1 molecule of RNA (18S). The 60S subunit contains about 49 different proteins and 3 molecules of RNA (25S, 5.8S and 5S).

It is found in the cytoplasm. The chain is Small ribosomal subunit protein eS1A from Scheffersomyces stipitis (strain ATCC 58785 / CBS 6054 / NBRC 10063 / NRRL Y-11545) (Yeast).